A 1528-amino-acid polypeptide reads, in one-letter code: Zinc finger FYVE domain-containing protein 16 (1528 aa).

Ser120 is subject to Phosphoserine. The interval 629–664 (TQAVGGARPKQLLSLPPGTRSSKELNKPDVVDVPES) is disordered. Residues 649–658 (SSKELNKPDV) show a composition bias toward basic and acidic residues. The FYVE-type zinc-finger motif lies at 735-793 (DSEAPNCMNCQVKFTFTKRRHHCRACGKVFCGVCCNRKCKLQYLEKEARVCVICYETIN). Zn(2+)-binding residues include Cys741, Cys744, Cys757, Cys760, Cys765, Cys768, Cys785, and Cys788. Residues Ser803, Ser833, Ser884, and Ser927 each carry the phosphoserine modification. Residues 819 to 849 (TDQPLQETQTSSTPSPTTLPISALKQPNVEG) form a disordered region. A compositionally biased stretch (low complexity) spans 821–838 (QPLQETQTSSTPSPTTLP). The segment at 928–949 (PTCHTAPVERLPGNTGTEGLPM) is disordered.

Interacts (via C-terminus) with TOM1 (via C-terminus); interaction is required to target TOM1 to endosomes. Does not interact with TOM1L1 or TOM1L2.

Its subcellular location is the cytoplasm. It is found in the early endosome membrane. May be involved in regulating membrane trafficking in the endosomal pathway. Overexpression induces endosome aggregation. Required to target TOM1 to endosomes. The protein is Zinc finger FYVE domain-containing protein 16 (Zfyve16) of Mus musculus (Mouse).